A 279-amino-acid polypeptide reads, in one-letter code: Tryptophan 2,3-dioxygenase (279 aa).

Substrate-binding positions include 48–52, tyrosine 110, and arginine 114; that span reads FIVIH. Position 237 (histidine 237) interacts with heme. Residue threonine 251 participates in substrate binding.

The protein belongs to the tryptophan 2,3-dioxygenase family. Homotetramer. The cofactor is heme.

The catalysed reaction is L-tryptophan + O2 = N-formyl-L-kynurenine. It participates in amino-acid degradation; L-tryptophan degradation via kynurenine pathway; L-kynurenine from L-tryptophan: step 1/2. In terms of biological role, heme-dependent dioxygenase that catalyzes the oxidative cleavage of the L-tryptophan (L-Trp) pyrrole ring and converts L-tryptophan to N-formyl-L-kynurenine. Catalyzes the oxidative cleavage of the indole moiety. This chain is Tryptophan 2,3-dioxygenase, found in Bacillus cereus (strain ZK / E33L).